A 432-amino-acid chain; its full sequence is Vacuolar protein sorting-associated protein 38 (432 aa).

Asparagine 20 is a glycosylation site (N-linked (GlcNAc...) asparagine). Residues 216–287 (LDTYQENIKM…KEAIEKLQKK (72 aa)) are a coiled coil. A helical transmembrane segment spans residues 348-365 (IINAMLGFYSLFIVIYSY).

This sequence belongs to the VPS38 family. In terms of assembly, component of the VPS34 PI3-kinase complex II composed of VPS15, VPS30, VPS34 and VPS38.

Its subcellular location is the golgi apparatus. It is found in the trans-Golgi network membrane. It localises to the endosome membrane. In terms of biological role, involved in endosome-to-Golgi retrograde transport as part of the VPS34 PI3-kinase complex II. This complex is required for the endosome-to-Golgi retrieval of PEP1 and KEX2, and the recruitment of VPS5 and VPS7, two components of the retromer complex, to endosomal membranes (probably through generating a specific pool of phosphatidylinositol 3-phosphate allowing the recruitment of the retromer complex proteins to the endosome). Mediates the interaction between VPS30 and the VPS34-VPS15 core complex, leading to the recruitment of VPS30 to the membrane. This chain is Vacuolar protein sorting-associated protein 38, found in Candida glabrata (strain ATCC 2001 / BCRC 20586 / JCM 3761 / NBRC 0622 / NRRL Y-65 / CBS 138) (Yeast).